The following is a 132-amino-acid chain: Large ribosomal subunit protein uL14 (132 aa).

This sequence belongs to the universal ribosomal protein uL14 family. Part of the 50S ribosomal subunit. Forms a cluster with proteins L3 and L24e, part of which may contact the 16S rRNA in 2 intersubunit bridges.

Functionally, binds to 23S rRNA. Forms part of two intersubunit bridges in the 70S ribosome. The chain is Large ribosomal subunit protein uL14 from Halorubrum lacusprofundi (strain ATCC 49239 / DSM 5036 / JCM 8891 / ACAM 34).